The primary structure comprises 310 residues: tRNA-cytidine(32) 2-sulfurtransferase (310 aa).

A PP-loop motif motif is present at residues 48–53 (SGGKDS). Positions 123, 126, and 214 each coordinate [4Fe-4S] cluster.

It belongs to the TtcA family. As to quaternary structure, homodimer. Requires Mg(2+) as cofactor. It depends on [4Fe-4S] cluster as a cofactor.

It localises to the cytoplasm. It carries out the reaction cytidine(32) in tRNA + S-sulfanyl-L-cysteinyl-[cysteine desulfurase] + AH2 + ATP = 2-thiocytidine(32) in tRNA + L-cysteinyl-[cysteine desulfurase] + A + AMP + diphosphate + H(+). It participates in tRNA modification. Its function is as follows. Catalyzes the ATP-dependent 2-thiolation of cytidine in position 32 of tRNA, to form 2-thiocytidine (s(2)C32). The sulfur atoms are provided by the cysteine/cysteine desulfurase (IscS) system. In Vibrio vulnificus (strain CMCP6), this protein is tRNA-cytidine(32) 2-sulfurtransferase.